We begin with the raw amino-acid sequence, 182 residues long: uncharacterized protein (182 aa).

It is found in the plastid. The protein localises to the cyanelle. This is an uncharacterized protein from Cyanophora paradoxa.